The primary structure comprises 348 residues: NADH-ubiquinone oxidoreductase chain 2 (348 aa).

Helical transmembrane passes span 3-23 (PVVLTIIISSLGLGTMMTFIG), 25-45 (HWLLVWMGLEINTLAIIPLMI), 67-87 (SALLLFASITNAWSLGEWSLL), 95-115 (ATLVTIALALKIGLAPMHFWL), 118-138 (VLQGLDLITGLILATWQKLAP), 149-171 (LNSNLLLFLGVSSTVIGGWGGLN), 178-198 (ILAYSSIAHLGWMITILHYSP), 203-223 (LNLALYIIMTLTTFLLFKLFN), 240-260 (LSIIALITLLSLGGLPPLSGF), 274-294 (DLAIPATIMALAALLSLFFYL), and 324-344 (LILMMATSLSILLLPLTPTIF).

Belongs to the complex I subunit 2 family.

The protein localises to the mitochondrion inner membrane. It carries out the reaction a ubiquinone + NADH + 5 H(+)(in) = a ubiquinol + NAD(+) + 4 H(+)(out). Its function is as follows. Core subunit of the mitochondrial membrane respiratory chain NADH dehydrogenase (Complex I) that is believed to belong to the minimal assembly required for catalysis. Complex I functions in the transfer of electrons from NADH to the respiratory chain. The immediate electron acceptor for the enzyme is believed to be ubiquinone. The chain is NADH-ubiquinone oxidoreductase chain 2 (MT-ND2) from Squalus acanthias (Spiny dogfish).